Here is a 228-residue protein sequence, read N- to C-terminus: Ribosomal RNA large subunit methyltransferase E (228 aa).

S-adenosyl-L-methionine-binding residues include Gly-76, Trp-78, Asp-99, Asp-115, and Asp-139. Lys-179 functions as the Proton acceptor in the catalytic mechanism.

The protein belongs to the class I-like SAM-binding methyltransferase superfamily. RNA methyltransferase RlmE family.

It is found in the cytoplasm. The catalysed reaction is uridine(2552) in 23S rRNA + S-adenosyl-L-methionine = 2'-O-methyluridine(2552) in 23S rRNA + S-adenosyl-L-homocysteine + H(+). Its function is as follows. Specifically methylates the uridine in position 2552 of 23S rRNA at the 2'-O position of the ribose in the fully assembled 50S ribosomal subunit. The sequence is that of Ribosomal RNA large subunit methyltransferase E from Nitrobacter hamburgensis (strain DSM 10229 / NCIMB 13809 / X14).